A 1159-amino-acid chain; its full sequence is Cation channel sperm-associated auxiliary subunit gamma (1159 aa).

An N-terminal signal peptide occupies residues 1–35 (MCGPAMFPAGPRWPRVRVLQVLWALLAVLLASRRL). At 36–1065 (WAIKDFEECT…IHGLPLSPKR (1030 aa)) the chain is on the extracellular side. Disulfide bonds link Cys-44-Cys-105 and Cys-159-Cys-165. Asn-102 carries an N-linked (GlcNAc...) asparagine glycan. Residue Asn-177 is glycosylated (N-linked (GlcNAc...) asparagine). A disulfide bond links Cys-288 and Cys-343. Residue Asn-355 is glycosylated (N-linked (GlcNAc...) asparagine). Cys-394 and Cys-402 are oxidised to a cystine. 2 N-linked (GlcNAc...) asparagine glycosylation sites follow: Asn-426 and Asn-574. 5 cysteine pairs are disulfide-bonded: Cys-638-Cys-860, Cys-806-Cys-834, Cys-882-Cys-1046, Cys-909-Cys-918, and Cys-1010-Cys-1016. A helical transmembrane segment spans residues 1066 to 1087 (ALFILMVSLSVFVGLVIFYIAF). Topologically, residues 1088–1159 (CLLWPLVVKG…KEAVERQLMT (72 aa)) are cytoplasmic. Positions 1138 to 1159 (FSSRMTEDKAEPKEAVERQLMT) are disordered. The span at 1142 to 1159 (MTEDKAEPKEAVERQLMT) shows a compositional bias: basic and acidic residues.

The protein belongs to the CATSPERG family. As to quaternary structure, component of the CatSper complex or CatSpermasome composed of the core pore-forming members CATSPER1, CATSPER2, CATSPER3 and CATSPER4 as well as auxiliary members CATSPERB, CATSPERG, CATSPERD, CATSPERE, CATSPERZ, SCLO6C1, TMEM249, TMEM262 and EFCAB9. HSPA1 may be an additional auxiliary complex member. The core complex members CATSPER1, CATSPER2, CATSPER3 and CATSPER4 form a heterotetrameric channel. The auxiliary CATSPERB, CATSPERG, CATSPERD and CATSPERE subunits form a pavilion-like structure over the pore which stabilizes the complex through interactions with CATSPER4, CATSPER3, CATSPER1 and CATSPER2 respectively. TMEM262/CATSPERH interacts with CATSPERB, further stabilizing the complex. C2CD6/CATSPERT interacts at least with CATSPERD and is required for targeting the CatSper complex in the flagellar membrane.

The protein localises to the cell projection. It localises to the cilium. Its subcellular location is the flagellum membrane. Its function is as follows. Auxiliary component of the CatSper complex, a complex involved in sperm cell hyperactivation. Sperm cell hyperactivation is needed for sperm motility which is essential late in the preparation of sperm for fertilization. This chain is Cation channel sperm-associated auxiliary subunit gamma, found in Macaca fascicularis (Crab-eating macaque).